The primary structure comprises 212 residues: Imidazole glycerol phosphate synthase subunit HisH (212 aa).

One can recognise a Glutamine amidotransferase type-1 domain in the interval 2–212 (QTAIIDYGMG…LTMLKNFLNW (211 aa)). Cysteine 85 serves as the catalytic Nucleophile. Active-site residues include histidine 194 and glutamate 196.

Heterodimer of HisH and HisF.

Its subcellular location is the cytoplasm. The catalysed reaction is 5-[(5-phospho-1-deoxy-D-ribulos-1-ylimino)methylamino]-1-(5-phospho-beta-D-ribosyl)imidazole-4-carboxamide + L-glutamine = D-erythro-1-(imidazol-4-yl)glycerol 3-phosphate + 5-amino-1-(5-phospho-beta-D-ribosyl)imidazole-4-carboxamide + L-glutamate + H(+). The enzyme catalyses L-glutamine + H2O = L-glutamate + NH4(+). It functions in the pathway amino-acid biosynthesis; L-histidine biosynthesis; L-histidine from 5-phospho-alpha-D-ribose 1-diphosphate: step 5/9. In terms of biological role, IGPS catalyzes the conversion of PRFAR and glutamine to IGP, AICAR and glutamate. The HisH subunit catalyzes the hydrolysis of glutamine to glutamate and ammonia as part of the synthesis of IGP and AICAR. The resulting ammonia molecule is channeled to the active site of HisF. In Neisseria gonorrhoeae (strain ATCC 700825 / FA 1090), this protein is Imidazole glycerol phosphate synthase subunit HisH.